We begin with the raw amino-acid sequence, 993 residues long: Nisin biosynthesis protein NisB (993 aa).

The helical transmembrane segment at 838–851 (AIFCADSKIIPNLL) threads the bilayer.

This sequence to B.subtilis SpaB and S.epidermidis EpiB.

The protein localises to the cell membrane. Its function is as follows. Involved in the post-translational modification of the lantibiotic nisin. This Lactococcus lactis subsp. lactis (Streptococcus lactis) protein is Nisin biosynthesis protein NisB (nisB).